A 737-amino-acid polypeptide reads, in one-letter code: Polyribonucleotide nucleotidyltransferase (737 aa).

Mg(2+)-binding residues include aspartate 489 and aspartate 495. Residues 556 to 615 (PKIDTIKIDVDKIKIVIGKGGETIDKIIAETGVKIDIDEEGNVSIYSSDQDAINRAKEII) form the KH domain. The S1 motif domain occupies 625-693 (DEVYRAKVVR…EKGRIDASMK (69 aa)). Residues 691-737 (SMKALLPRPPKPEHDEKGEKSERPHRPRHHKDHKPKKEFTETPKDSE) are disordered. The span at 700–714 (PKPEHDEKGEKSERP) shows a compositional bias: basic and acidic residues. Residues 715–724 (HRPRHHKDHK) show a composition bias toward basic residues. Residues 725-737 (PKKEFTETPKDSE) show a composition bias toward basic and acidic residues.

The protein belongs to the polyribonucleotide nucleotidyltransferase family. Requires Mg(2+) as cofactor.

Its subcellular location is the cytoplasm. It carries out the reaction RNA(n+1) + phosphate = RNA(n) + a ribonucleoside 5'-diphosphate. In terms of biological role, involved in mRNA degradation. Catalyzes the phosphorolysis of single-stranded polyribonucleotides processively in the 3'- to 5'-direction. The protein is Polyribonucleotide nucleotidyltransferase of Streptococcus pneumoniae serotype 19F (strain G54).